Reading from the N-terminus, the 290-residue chain is MLKTIQDKARHRTRPLWAWLKLLWQRIDEDNMTTLAGNLAYVSLLSLVPLVAVVFALFAAFPMFSDVSIQLRHFIFANFLPATGDVIQRYIEQFVANSNKMTAVGACGLIVTALLLMYSIDSALNAIWRSKRARPKIYSFAVYWMILTLGPLLAGASLAISSYLLSLRWASDLNTVIDNVLRIFPLLLSWISFWLLYSIVPTIRVPNRDAIVGAFVAALLFEAGKKGFALYITMFPSYQLIYGVLAVIPILFVWVYWTWCIVLLGAEITVTLGEYRKLKQAAEQEEDDEP.

6 helical membrane passes run Leu44–Phe64, Val104–Leu124, Phe140–Ile160, Ile183–Ile203, Ala210–Leu230, and Val244–Leu264.

This sequence belongs to the UPF0761 family.

Its subcellular location is the cell inner membrane. This is UPF0761 membrane protein YihY from Escherichia coli O7:K1 (strain IAI39 / ExPEC).